A 413-amino-acid chain; its full sequence is O-methyltransferase kntB (413 aa).

S-adenosyl-L-methionine-binding positions include 255 to 256, D280, 302 to 303, and R319; these read GG and NF. H322 functions as the Proton acceptor in the catalytic mechanism.

Belongs to the class I-like SAM-binding methyltransferase superfamily. Cation-independent O-methyltransferase family. S-adenosyl-L-methionine serves as cofactor.

It functions in the pathway secondary metabolite biosynthesis. Its function is as follows. Non-reducing polyketide synthase; part of the gene cluster that mediates the biosynthesis of the bicoumarin kotanin. The non-reducing polyketide synthase ktnS first catalyzes the formation of the pentaketidic 4,7-dihydroxy-5-methylcoumarin from acetyl coenzyme A and 4 malonyl coenzyme A molecules. Further O-methylation by ktnB leads to the formation of 7-demethylsiderin. Then, an oxidative phenol coupling catalyzed by the cytochrome P450 monooxygenase ktnC forms the 8,8'-dimer P-orlandin via dimerization the monomeric precursor, 7-demethylsiderin. P-orlandin is subsequently O-methylated in a stepwise fashion to demethylkotanin and kotanin. This is O-methyltransferase kntB from Aspergillus niger (strain ATCC MYA-4892 / CBS 513.88 / FGSC A1513).